The primary structure comprises 109 residues: Large ribosomal subunit protein uL22 (109 aa).

The protein belongs to the universal ribosomal protein uL22 family. Part of the 50S ribosomal subunit.

In terms of biological role, this protein binds specifically to 23S rRNA; its binding is stimulated by other ribosomal proteins, e.g. L4, L17, and L20. It is important during the early stages of 50S assembly. It makes multiple contacts with different domains of the 23S rRNA in the assembled 50S subunit and ribosome. Its function is as follows. The globular domain of the protein is located near the polypeptide exit tunnel on the outside of the subunit, while an extended beta-hairpin is found that lines the wall of the exit tunnel in the center of the 70S ribosome. The chain is Large ribosomal subunit protein uL22 from Laribacter hongkongensis (strain HLHK9).